The chain runs to 202 residues: MSRYRGPRLRIVRRLGDLPGLTRKSARRAYPPGQHGQNRKKRSEYAIRLEEKQKLRFNYGLTEKQLLRYVRKARRVTGSTGQVLLQLLEMRLDNTVFRLGIAPTIPAARQLVNHGHVTVNGRVVNIASYQCRPGEVIAVRDRAQSRKLVEANLQYPGLANLPSHLEFDKNKLVGKVNSVIEREWVALQVNELLVVEYYSRQA.

The segment at 22–43 (TRKSARRAYPPGQHGQNRKKRS) is disordered. The S4 RNA-binding domain maps to 90-152 (MRLDNTVFRL…AQSRKLVEAN (63 aa)).

The protein belongs to the universal ribosomal protein uS4 family. In terms of assembly, part of the 30S ribosomal subunit. Contacts protein S5. The interaction surface between S4 and S5 is involved in control of translational fidelity.

In terms of biological role, one of the primary rRNA binding proteins, it binds directly to 16S rRNA where it nucleates assembly of the body of the 30S subunit. Functionally, with S5 and S12 plays an important role in translational accuracy. The protein is Small ribosomal subunit protein uS4 of Nostoc punctiforme (strain ATCC 29133 / PCC 73102).